A 258-amino-acid chain; its full sequence is MLAKRIIPCLDVKDGQVVKGVQFRNHEIIGDIVPLAQRYAQEGADELVFYDITASSDGRVVDKSWVSRVAEVIDIPFCVAGGIKSVEDAGQILTFGADKISINSPALADPTLITRLADRYGVQCIVVGIDTWYDEESDSYQVYQFTGDEKRTKATTWQTEDWIKEVQLRGAGEIVLNMMNQDGVRNGYDLRQLKQMRTICHVPLIASGGAGTSEHFLEAFRDADVDGALAASVFHKQIINIGELKKYLSEQGVEIRVC.

Residues Asp-11 and Asp-130 contribute to the active site.

The protein belongs to the HisA/HisF family. Heterodimer of HisH and HisF.

Its subcellular location is the cytoplasm. The catalysed reaction is 5-[(5-phospho-1-deoxy-D-ribulos-1-ylimino)methylamino]-1-(5-phospho-beta-D-ribosyl)imidazole-4-carboxamide + L-glutamine = D-erythro-1-(imidazol-4-yl)glycerol 3-phosphate + 5-amino-1-(5-phospho-beta-D-ribosyl)imidazole-4-carboxamide + L-glutamate + H(+). It functions in the pathway amino-acid biosynthesis; L-histidine biosynthesis; L-histidine from 5-phospho-alpha-D-ribose 1-diphosphate: step 5/9. Functionally, IGPS catalyzes the conversion of PRFAR and glutamine to IGP, AICAR and glutamate. The HisF subunit catalyzes the cyclization activity that produces IGP and AICAR from PRFAR using the ammonia provided by the HisH subunit. This chain is Imidazole glycerol phosphate synthase subunit HisF, found in Yersinia enterocolitica serotype O:8 / biotype 1B (strain NCTC 13174 / 8081).